We begin with the raw amino-acid sequence, 194 residues long: Phosphoheptose isomerase (194 aa).

The 158-residue stretch at 37–194 (ISNSFKQGGK…LIEFEMAKQA (158 aa)) folds into the SIS domain. 52 to 54 (NGG) serves as a coordination point for substrate. Zn(2+) contacts are provided by histidine 61 and glutamate 65. Substrate is bound by residues glutamate 65, 93-94 (ND), 119-121 (STS), serine 124, and glutamine 172. Zn(2+) is bound by residues glutamine 172 and histidine 180.

The protein belongs to the SIS family. GmhA subfamily. Homotetramer. It depends on Zn(2+) as a cofactor.

It localises to the cytoplasm. The catalysed reaction is 2 D-sedoheptulose 7-phosphate = D-glycero-alpha-D-manno-heptose 7-phosphate + D-glycero-beta-D-manno-heptose 7-phosphate. It functions in the pathway carbohydrate biosynthesis; D-glycero-D-manno-heptose 7-phosphate biosynthesis; D-glycero-alpha-D-manno-heptose 7-phosphate and D-glycero-beta-D-manno-heptose 7-phosphate from sedoheptulose 7-phosphate: step 1/1. In terms of biological role, catalyzes the isomerization of sedoheptulose 7-phosphate in D-glycero-D-manno-heptose 7-phosphate. In Actinobacillus pleuropneumoniae serotype 5b (strain L20), this protein is Phosphoheptose isomerase.